The chain runs to 234 residues: UPF0173 metal-dependent hydrolase Smed_0942 (234 aa).

It belongs to the UPF0173 family.

This is UPF0173 metal-dependent hydrolase Smed_0942 from Sinorhizobium medicae (strain WSM419) (Ensifer medicae).